The sequence spans 368 residues: 2-aminoethylphosphonate--pyruvate transaminase (368 aa).

Lys192 carries the N6-(pyridoxal phosphate)lysine modification.

This sequence belongs to the class-V pyridoxal-phosphate-dependent aminotransferase family. PhnW subfamily. In terms of assembly, homodimer. Requires pyridoxal 5'-phosphate as cofactor.

The catalysed reaction is (2-aminoethyl)phosphonate + pyruvate = phosphonoacetaldehyde + L-alanine. In terms of biological role, involved in phosphonate degradation. The protein is 2-aminoethylphosphonate--pyruvate transaminase of Pseudomonas putida (strain ATCC 47054 / DSM 6125 / CFBP 8728 / NCIMB 11950 / KT2440).